Consider the following 120-residue polypeptide: Ribonuclease P protein component (120 aa).

This sequence belongs to the RnpA family. As to quaternary structure, consists of a catalytic RNA component (M1 or rnpB) and a protein subunit.

The enzyme catalyses Endonucleolytic cleavage of RNA, removing 5'-extranucleotides from tRNA precursor.. RNaseP catalyzes the removal of the 5'-leader sequence from pre-tRNA to produce the mature 5'-terminus. It can also cleave other RNA substrates such as 4.5S RNA. The protein component plays an auxiliary but essential role in vivo by binding to the 5'-leader sequence and broadening the substrate specificity of the ribozyme. In Chelativorans sp. (strain BNC1), this protein is Ribonuclease P protein component.